A 427-amino-acid polypeptide reads, in one-letter code: Histidinol dehydrogenase (427 aa).

NAD(+) is bound by residues Tyr-127, Gln-187, and Asn-210. Residues Ser-233, Gln-255, and His-258 each contribute to the substrate site. Zn(2+) is bound by residues Gln-255 and His-258. Residues Glu-323 and His-324 each act as proton acceptor in the active site. Positions 324, 357, 411, and 416 each coordinate substrate. Asp-357 contacts Zn(2+). His-416 is a binding site for Zn(2+).

This sequence belongs to the histidinol dehydrogenase family. Zn(2+) serves as cofactor.

The enzyme catalyses L-histidinol + 2 NAD(+) + H2O = L-histidine + 2 NADH + 3 H(+). The protein operates within amino-acid biosynthesis; L-histidine biosynthesis; L-histidine from 5-phospho-alpha-D-ribose 1-diphosphate: step 9/9. In terms of biological role, catalyzes the sequential NAD-dependent oxidations of L-histidinol to L-histidinaldehyde and then to L-histidine. This is Histidinol dehydrogenase from Streptococcus mutans serotype c (strain ATCC 700610 / UA159).